The following is a 448-amino-acid chain: Trk system potassium uptake protein TrkA homolog 2 (448 aa).

The 124-residue stretch at 1 to 124 (MKAVVIGAGE…RAQVGVDIMI (124 aa)) folds into the RCK N-terminal 1 domain. NAD(+) contacts are provided by residues 7–11 (GAGEV), Glu29, 70–71 (TG), and Arg101. The 82-residue stretch at 144 to 225 (IDAEMFAGGK…MADLENVFGN (82 aa)) folds into the RCK C-terminal 1 domain. The RCK N-terminal 2 domain occupies 230–348 (RNRILLIGCG…FEMVGIDIAV (119 aa)). Residue 232–262 (RILLIGCGIVGFYLAKIIDKDENADLKVIEY) participates in NAD(+) binding. Residues 368 to 448 (EALATIEGEK…AVRSVEKLFK (81 aa)) enclose the RCK C-terminal 2 domain.

Its function is as follows. Part of a potassium transport system. The sequence is that of Trk system potassium uptake protein TrkA homolog 2 (trkA2) from Methanosarcina mazei (strain ATCC BAA-159 / DSM 3647 / Goe1 / Go1 / JCM 11833 / OCM 88) (Methanosarcina frisia).